The chain runs to 218 residues: Probable GTP-binding protein EngB (218 aa).

Residues 23-200 (EVPEIAFVGR…AQLLWQWAHP (178 aa)) form the EngB-type G domain. GTP is bound by residues 31–38 (GRSNAGKS), 58–62 (GRTQH), 80–83 (DLPG), 150–153 (TKAD), and 179–181 (FSA). Residues Ser-38 and Thr-60 each coordinate Mg(2+).

This sequence belongs to the TRAFAC class TrmE-Era-EngA-EngB-Septin-like GTPase superfamily. EngB GTPase family. Mg(2+) is required as a cofactor.

Functionally, necessary for normal cell division and for the maintenance of normal septation. The sequence is that of Probable GTP-binding protein EngB from Acidovorax ebreus (strain TPSY) (Diaphorobacter sp. (strain TPSY)).